We begin with the raw amino-acid sequence, 627 residues long: Transketolase-like protein 2 (627 aa).

H39 serves as a coordination point for substrate. Residues S42, H79, and 125–127 (GSL) each bind thiamine diphosphate. D157 provides a ligand contact to Mg(2+). Residues G158 and N187 each coordinate thiamine diphosphate. Residues N187 and L189 each contribute to the Mg(2+) site. The thiamine diphosphate site is built by K249 and H263. Residues H263, R323, and S350 each contribute to the substrate site. Residues E371 and F397 each contribute to the thiamine diphosphate site. Catalysis depends on E371, which acts as the Proton donor. H421 and D429 together coordinate substrate. Thiamine diphosphate is bound at residue Q433. Residue R479 participates in substrate binding.

It belongs to the transketolase family. In terms of assembly, homodimer. Mg(2+) serves as cofactor. The cofactor is Ca(2+). Requires Mn(2+) as cofactor. It depends on Co(2+) as a cofactor. Thiamine diphosphate is required as a cofactor.

It catalyses the reaction D-sedoheptulose 7-phosphate + D-glyceraldehyde 3-phosphate = aldehydo-D-ribose 5-phosphate + D-xylulose 5-phosphate. Functionally, plays an essential role in total transketolase activity and cell proliferation in cancer cells; after transfection with anti-TKTL1 siRNA, total transketolase activity dramatically decreases and proliferation was significantly inhibited in cancer cells. Plays a pivotal role in carcinogenesis. The protein is Transketolase-like protein 2 (Tktl2) of Mus musculus (Mouse).